The sequence spans 310 residues: Glutaminase 1 (310 aa).

Substrate is bound by residues Ser66, Asn117, Glu161, Asn168, Tyr192, Tyr244, and Val262. Lys294 bears the N6-acetyllysine mark.

Belongs to the glutaminase family. In terms of assembly, homotetramer.

It carries out the reaction L-glutamine + H2O = L-glutamate + NH4(+). In Escherichia coli O157:H7, this protein is Glutaminase 1.